The sequence spans 694 residues: DNA-directed RNA polymerase subunit beta' (694 aa).

Zn(2+) is bound by residues Cys69, Cys71, Cys87, and Cys90. Residues Asp489, Asp491, and Asp493 each coordinate Mg(2+).

It belongs to the RNA polymerase beta' chain family. RpoC1 subfamily. In plastids the minimal PEP RNA polymerase catalytic core is composed of four subunits: alpha, beta, beta', and beta''. When a (nuclear-encoded) sigma factor is associated with the core the holoenzyme is formed, which can initiate transcription. The cofactor is Mg(2+). It depends on Zn(2+) as a cofactor.

It localises to the plastid. It is found in the chloroplast. It catalyses the reaction RNA(n) + a ribonucleoside 5'-triphosphate = RNA(n+1) + diphosphate. In terms of biological role, DNA-dependent RNA polymerase catalyzes the transcription of DNA into RNA using the four ribonucleoside triphosphates as substrates. This Adiantum capillus-veneris (Maidenhair fern) protein is DNA-directed RNA polymerase subunit beta'.